A 337-amino-acid chain; its full sequence is Heme A synthase (337 aa).

The next 5 helical transmembrane spans lie at 6 to 26, 87 to 107, 119 to 139, 154 to 174, and 192 to 212; these read ITKWLFVSCIMVIAMVVIGGI, FIHRLLGRMTVLIYIVPLIYF, LPYIIALLLFCVQGFMGWYMV, LAFHLIIAVIIYHILFYQLIK, and LIFSGIAITVIYVQIFLGALV. Histidine 256 contacts heme. Helical transmembrane passes span 258–278, 285–305, and 308–328; these read LGSYSVFLVVVVLVICLLTIE, IAYFLMIALLMQISTGIITLL, and VPIIIASIHQLFAIILLSIII. Position 316 (histidine 316) interacts with heme.

Belongs to the COX15/CtaA family. Type 2 subfamily. Interacts with CtaB. The cofactor is heme b.

It localises to the cell membrane. The enzyme catalyses Fe(II)-heme o + 2 A + H2O = Fe(II)-heme a + 2 AH2. It participates in porphyrin-containing compound metabolism; heme A biosynthesis; heme A from heme O: step 1/1. In terms of biological role, catalyzes the conversion of heme O to heme A by two successive hydroxylations of the methyl group at C8. The first hydroxylation forms heme I, the second hydroxylation results in an unstable dihydroxymethyl group, which spontaneously dehydrates, resulting in the formyl group of heme A. The polypeptide is Heme A synthase (Rickettsia akari (strain Hartford)).